The sequence spans 235 residues: Probable membrane-associated kinase regulator 6 (235 aa).

The tract at residues 108–140 (SAATEEESEPLDTTTSEKIDTRGLNSKPSPTSS) is disordered. The segment covering 130 to 140 (GLNSKPSPTSS) has biased composition (polar residues).

It localises to the cell membrane. Its function is as follows. May be involved in abscisic acid signaling by acting as a kinase regulator. This chain is Probable membrane-associated kinase regulator 6 (MAKR6), found in Arabidopsis thaliana (Mouse-ear cress).